Here is a 192-residue protein sequence, read N- to C-terminus: Ion-translocating oxidoreductase complex subunit A (192 aa).

6 consecutive transmembrane segments (helical) span residues 5-25 (LLLL…FLGL), 39-59 (IGMS…SYLV), 65-85 (LPFD…AVVV), 102-122 (ALGI…VALL), 134-154 (AIYG…FSAM), and 171-191 (AIAM…TGLV).

This sequence belongs to the NqrDE/RnfAE family. The complex is composed of six subunits: RnfA, RnfB, RnfC, RnfD, RnfE and RnfG.

The protein resides in the cell inner membrane. Functionally, part of a membrane-bound complex that couples electron transfer with translocation of ions across the membrane. This Shewanella oneidensis (strain ATCC 700550 / JCM 31522 / CIP 106686 / LMG 19005 / NCIMB 14063 / MR-1) protein is Ion-translocating oxidoreductase complex subunit A.